The primary structure comprises 38 residues: RapG inhibitor (38 aa).

Positions 1 to 33 are excised as a propeptide; sequence MKRFLIGAGVAAVILSGWFIADHQTHSQEMKVA.

It belongs to the Phr family. Post-translationally, contains a predicted signal peptide cleavage site in the N-terminal region, however the propeptide is probably subject to only one processing event, at the N-terminal end of the mature peptide.

The protein resides in the secreted. The protein localises to the cytoplasm. Signaling molecule involved in the regulation of expression of DegU-controlled genes. Secreted during production, but the mature peptide acts intracellularly, indicating that it needs to be imported into the cell to function. Stimulates the DegU-dependent expression of aprE, an extracellular alkaline protease. Acts by inhibiting RapG activity. At high concentrations, represses the DegS-dependent aprE expression. The sequence is that of RapG inhibitor (phrG) from Bacillus subtilis (strain 168).